Reading from the N-terminus, the 267-residue chain is Tryptophan synthase alpha chain (267 aa).

Residues E49 and D60 each act as proton acceptor in the active site.

Belongs to the TrpA family. As to quaternary structure, tetramer of two alpha and two beta chains.

The enzyme catalyses (1S,2R)-1-C-(indol-3-yl)glycerol 3-phosphate + L-serine = D-glyceraldehyde 3-phosphate + L-tryptophan + H2O. It participates in amino-acid biosynthesis; L-tryptophan biosynthesis; L-tryptophan from chorismate: step 5/5. Its function is as follows. The alpha subunit is responsible for the aldol cleavage of indoleglycerol phosphate to indole and glyceraldehyde 3-phosphate. This chain is Tryptophan synthase alpha chain, found in Acinetobacter baylyi (strain ATCC 33305 / BD413 / ADP1).